The sequence spans 131 residues: DNA-directed RNA polymerases I, II, and III subunit RPABC2 (131 aa).

The tract at residues 1-24 is disordered; that stretch reads MDDADYDNDDVGGDDFDDVDEDVD.

This sequence belongs to the archaeal Rpo6/eukaryotic RPB6 RNA polymerase subunit family. Component of the RNA polymerase I (Pol I), RNA polymerase II (Pol II) and RNA polymerase III (Pol III) complexes consisting of at least 13, 12 and 17 subunits, respectively.

It is found in the nucleus. Functionally, DNA-dependent RNA polymerases catalyze the transcription of DNA into RNA using the four ribonucleoside triphosphates as substrates. Common component of RNA polymerases I, II and III which synthesize ribosomal RNA precursors, mRNA precursors and many functional non-coding RNAs, and small RNAs, such as 5S rRNA and tRNAs, respectively. Pol II is the central component of the basal RNA polymerase II transcription machinery. Pols are composed of mobile elements that move relative to each other. In Pol II, Polr2F/RPB6 is part of the clamp element and together with parts of Polr2A/RPB1 and RPB2 forms a pocket to which the Polr2D/RPB4-Polr2G/RPB7 subcomplex binds. In Drosophila melanogaster (Fruit fly), this protein is DNA-directed RNA polymerases I, II, and III subunit RPABC2.